The primary structure comprises 1058 residues: Kinesin-like protein KIN-7M, chloroplastic (1058 aa).

The N-terminal 60 residues, 1–60 (MASSSSRTRSRSPFSHRRPPSPYSSASSTSSSLINNRLLPRSSSTPTSTVYNSGGVTGSR), are a transit peptide targeting the chloroplast. A disordered region spans residues 1-92 (MASSSSRTRS…QSYPSEGLIG (92 aa)). The segment covering 8 to 19 (TRSRSPFSHRRP) has biased composition (basic residues). A compositionally biased stretch (low complexity) spans 23–49 (YSSASSTSSSLINNRLLPRSSSTPTST). Over residues 50–70 (VYNSGGVTGSRSMSITRTISD) the composition is skewed to polar residues. A Kinesin motor domain is found at 104–421 (SISVTVRFRP…LKFASRAKRI (318 aa)). 184 to 191 (GVTSSGKT) provides a ligand contact to ATP. Residues 422–509 (EINASRNKII…QKLTKLILVS (88 aa)) are a coiled coil. Residues 549-578 (PSSTLSLASDARRSSSKFKDENSPVGSRAE) are disordered. Residues 558–570 (DARRSSSKFKDEN) are compositionally biased toward basic and acidic residues. Coiled coils occupy residues 621–658 (PENS…ASIA), 704–826 (NNEL…AQKR), 873–904 (LEAA…LEND), and 935–999 (KEDE…SQAA). Low complexity predominate over residues 824–838 (QKRNNNSMNSAANRN). Residues 824 to 847 (QKRNNNSMNSAANRNGTRPGRKAR) are disordered. Residues 922–946 (ALSIQKSDEAEPAKEDEVTELDNKN) are disordered. A compositionally biased stretch (basic and acidic residues) spans 927–946 (KSDEAEPAKEDEVTELDNKN). The RING-type zinc finger occupies 1011–1046 (CKVCFESPTATILLPCRHFCLCKSCSLACSECPICR).

It belongs to the TRAFAC class myosin-kinesin ATPase superfamily. Kinesin family. KIN-7 subfamily.

Its subcellular location is the plastid. It is found in the chloroplast. In Arabidopsis thaliana (Mouse-ear cress), this protein is Kinesin-like protein KIN-7M, chloroplastic.